The chain runs to 243 residues: Ubiquinone/menaquinone biosynthesis C-methyltransferase UbiE (243 aa).

S-adenosyl-L-methionine is bound by residues Thr-69, Asp-90, and 116–117; that span reads DA.

Belongs to the class I-like SAM-binding methyltransferase superfamily. MenG/UbiE family.

It carries out the reaction a 2-demethylmenaquinol + S-adenosyl-L-methionine = a menaquinol + S-adenosyl-L-homocysteine + H(+). The catalysed reaction is a 2-methoxy-6-(all-trans-polyprenyl)benzene-1,4-diol + S-adenosyl-L-methionine = a 5-methoxy-2-methyl-3-(all-trans-polyprenyl)benzene-1,4-diol + S-adenosyl-L-homocysteine + H(+). Its pathway is quinol/quinone metabolism; menaquinone biosynthesis; menaquinol from 1,4-dihydroxy-2-naphthoate: step 2/2. It functions in the pathway cofactor biosynthesis; ubiquinone biosynthesis. Methyltransferase required for the conversion of demethylmenaquinol (DMKH2) to menaquinol (MKH2) and the conversion of 2-polyprenyl-6-methoxy-1,4-benzoquinol (DDMQH2) to 2-polyprenyl-3-methyl-6-methoxy-1,4-benzoquinol (DMQH2). The polypeptide is Ubiquinone/menaquinone biosynthesis C-methyltransferase UbiE (Burkholderia vietnamiensis (strain G4 / LMG 22486) (Burkholderia cepacia (strain R1808))).